A 329-amino-acid polypeptide reads, in one-letter code: GTP 3',8-cyclase 1 (329 aa).

The Radical SAM core domain occupies 7–230 (GQGRQIDYLR…LDSAEQSGGP (224 aa)). GTP is bound at residue Arg16. Residues Cys23 and Cys27 each coordinate [4Fe-4S] cluster. Tyr29 provides a ligand contact to S-adenosyl-L-methionine. Cys30 serves as a coordination point for [4Fe-4S] cluster. Arg65 is a GTP binding site. Residue Gly69 coordinates S-adenosyl-L-methionine. Residue Thr96 participates in GTP binding. Residue Ser120 coordinates S-adenosyl-L-methionine. Lys157 serves as a coordination point for GTP. An S-adenosyl-L-methionine-binding site is contributed by Met191. Residues Cys255 and Cys258 each coordinate [4Fe-4S] cluster. 260–262 (RLR) provides a ligand contact to GTP. Position 272 (Cys272) interacts with [4Fe-4S] cluster.

This sequence belongs to the radical SAM superfamily. MoaA family. In terms of assembly, monomer and homodimer. [4Fe-4S] cluster is required as a cofactor.

It catalyses the reaction GTP + AH2 + S-adenosyl-L-methionine = (8S)-3',8-cyclo-7,8-dihydroguanosine 5'-triphosphate + 5'-deoxyadenosine + L-methionine + A + H(+). It participates in cofactor biosynthesis; molybdopterin biosynthesis. Functionally, catalyzes the cyclization of GTP to (8S)-3',8-cyclo-7,8-dihydroguanosine 5'-triphosphate. The protein is GTP 3',8-cyclase 1 (moaA1) of Pseudomonas aeruginosa (strain ATCC 15692 / DSM 22644 / CIP 104116 / JCM 14847 / LMG 12228 / 1C / PRS 101 / PAO1).